The sequence spans 62 residues: Large ribosomal subunit protein bL33 (62 aa).

This sequence belongs to the bacterial ribosomal protein bL33 family.

The sequence is that of Large ribosomal subunit protein bL33 from Bacteroides thetaiotaomicron (strain ATCC 29148 / DSM 2079 / JCM 5827 / CCUG 10774 / NCTC 10582 / VPI-5482 / E50).